Here is a 245-residue protein sequence, read N- to C-terminus: uncharacterized protein (245 aa).

To M.tuberculosis Rv2927c.

This is an uncharacterized protein from Mycobacterium leprae (strain TN).